The chain runs to 675 residues: DNA ligase (675 aa).

NAD(+) is bound by residues 35–39 (DAVYD), 84–85 (SL), and E118. K120 serves as the catalytic N6-AMP-lysine intermediate. NAD(+)-binding residues include R141, E178, K295, and K319. Residues C413, C416, C431, and C436 each contribute to the Zn(2+) site. Residues 598 to 675 (GAIGALTGQT…DEAELKALLS (78 aa)) enclose the BRCT domain.

It belongs to the NAD-dependent DNA ligase family. LigA subfamily. Requires Mg(2+) as cofactor. Mn(2+) serves as cofactor.

The enzyme catalyses NAD(+) + (deoxyribonucleotide)n-3'-hydroxyl + 5'-phospho-(deoxyribonucleotide)m = (deoxyribonucleotide)n+m + AMP + beta-nicotinamide D-nucleotide.. Functionally, DNA ligase that catalyzes the formation of phosphodiester linkages between 5'-phosphoryl and 3'-hydroxyl groups in double-stranded DNA using NAD as a coenzyme and as the energy source for the reaction. It is essential for DNA replication and repair of damaged DNA. The chain is DNA ligase from Synechococcus sp. (strain RCC307).